The following is a 734-amino-acid chain: MALRFPRFSQGLAQDPTTRRIWFGIATAHDFESHDDITEERLYQNIFASHFGQLAIIFLWTSGNLFHVAWQGNFETWIQDPLHVRPIAHAIWDPHFGQPAVEAFTRGGALGPVNIAYSGVYQWWYTIGLRTNEDLYTGALFLLFLSALSLIGGWLHLQPKWKPRVSWFKNAESRLNHHLSGLFGVSSLAWTGHLVHVAIPASRGEYVRWNNFLNVLPHPQGLGPLFTGQWNLYAQNPDSSSHLFGTSQGSGTAILTLLGGFHPQTQSLWLTDMAHHHLAIAILFLIAGHMYRTNFGIGHSIKDLLEAHIPPGGRLGRGHKGLYDTINNSIHFQLGLALASLGVITSLVAQHMYSLPAYAFIAQDFTTQAALYTHHQYIAGFIMTGAFAHGAIFFIRDYNPEQNEDNVLARMLDHKEAIISHLSWASLFLGFHTLGLYVHNDVMLAFGTPEKQILIEPIFAQWIQSAHGKTSYGFDVLLSSTNGPAFNAGRSIWLPGWLSAINENSNSLFLTIGPGDFLVHHAIALGLHTTTLILVKGALDARGSKLMPDKKDFGYSFPCDGPGRGGTCDISAWDAFYLAVFWMLNTIGWVTFYWHWKHITLWQGNVSQFNESSTYLMGWLRDYLWLNSSQLINGYNPFGMNSLSVWAWMFLFGHLVWATGFMFLISWRGYWQELIETLAWAHERTPLANLIRWKDKPVALSIVQARLVGLAHFSVGYIFTYAAFLIASTSGKFG.

Helical transmembrane passes span 46–69 (IFAS…FHVA), 135–158 (LYTG…LHLQ), 175–199 (LNHH…HVAI), 273–291 (MAHH…GHMY), 330–353 (IHFQ…QHMY), 369–395 (AALY…IFFI), 417–439 (AIIS…LYVH), and 517–535 (FLVH…LILV). 2 residues coordinate [4Fe-4S] cluster: Cys-559 and Cys-568. 2 helical membrane passes run 575 to 596 (AFYL…YWHW) and 643 to 665 (LSVW…MFLI). Residues His-654, Met-662, and Tyr-670 each coordinate chlorophyll a. Position 671 (Trp-671) interacts with phylloquinone. A helical membrane pass occupies residues 707 to 727 (LVGLAHFSVGYIFTYAAFLIA).

The protein belongs to the PsaA/PsaB family. The PsaA/B heterodimer binds the P700 chlorophyll special pair and subsequent electron acceptors. PSI consists of a core antenna complex that captures photons, and an electron transfer chain that converts photonic excitation into a charge separation. The eukaryotic PSI reaction center is composed of at least 11 subunits. It depends on P700 is a chlorophyll a/chlorophyll a' dimer, A0 is one or more chlorophyll a, A1 is one or both phylloquinones and FX is a shared 4Fe-4S iron-sulfur center. as a cofactor.

It localises to the plastid. It is found in the chloroplast thylakoid membrane. It catalyses the reaction reduced [plastocyanin] + hnu + oxidized [2Fe-2S]-[ferredoxin] = oxidized [plastocyanin] + reduced [2Fe-2S]-[ferredoxin]. PsaA and PsaB bind P700, the primary electron donor of photosystem I (PSI), as well as the electron acceptors A0, A1 and FX. PSI is a plastocyanin-ferredoxin oxidoreductase, converting photonic excitation into a charge separation, which transfers an electron from the donor P700 chlorophyll pair to the spectroscopically characterized acceptors A0, A1, FX, FA and FB in turn. Oxidized P700 is reduced on the lumenal side of the thylakoid membrane by plastocyanin. The polypeptide is Photosystem I P700 chlorophyll a apoprotein A2 (Lobularia maritima (Sweet alyssum)).